The primary structure comprises 584 residues: Pentatricopeptide repeat-containing protein At2g01510, mitochondrial (584 aa).

Residues 1–20 (MLAKQTPLTKQMLSELLRAS) constitute a mitochondrion transit peptide. 9 PPR repeats span residues 73 to 107 (RIFL…GVRP), 108 to 142 (DEFT…GFGC), 143 to 173 (LGIV…MQVK), 174 to 208 (DLVA…AVQF), 209 to 243 (DSFT…EIDC), 244 to 274 (NIIV…MKQR), 275 to 309 (NVVS…GLRP), 310 to 344 (NYVT…NDKN), and 348 to 378 (RKEH…MPVE). Residues 383-458 (IWGALLGACA…VAAYSSVEFE (76 aa)) are type E motif. Positions 459–489 (GKIHFFNRGDKSHPQSKAIYEKLDEILKKIR) are type E(+) motif. The interval 490–584 (KMGYVPDTCS…NGVCSCKEFW (95 aa)) is type DYW motif.

This sequence belongs to the PPR family. PCMP-H subfamily.

Its subcellular location is the mitochondrion. The sequence is that of Pentatricopeptide repeat-containing protein At2g01510, mitochondrial (PCMP-H37) from Arabidopsis thaliana (Mouse-ear cress).